Consider the following 1383-residue polypeptide: DNA-directed RNA polymerase subunit beta (1383 aa).

It belongs to the RNA polymerase beta chain family. As to quaternary structure, the RNAP catalytic core consists of 2 alpha, 1 beta, 1 beta' and 1 omega subunit. When a sigma factor is associated with the core the holoenzyme is formed, which can initiate transcription.

The enzyme catalyses RNA(n) + a ribonucleoside 5'-triphosphate = RNA(n+1) + diphosphate. Its function is as follows. DNA-dependent RNA polymerase catalyzes the transcription of DNA into RNA using the four ribonucleoside triphosphates as substrates. This is DNA-directed RNA polymerase subunit beta from Bartonella bacilliformis (strain ATCC 35685 / KC583 / Herrer 020/F12,63).